We begin with the raw amino-acid sequence, 408 residues long: 1-deoxy-D-xylulose 5-phosphate reductoisomerase (408 aa).

NADPH-binding residues include Thr19, Gly20, Ser21, Ile22, Gly45, Asn47, and Asn130. Position 131 (Lys131) interacts with 1-deoxy-D-xylulose 5-phosphate. Glu132 lines the NADPH pocket. Asp156 is a Mn(2+) binding site. 1-deoxy-D-xylulose 5-phosphate is bound by residues Ser157, Glu158, Ser182, and His205. Residue Glu158 coordinates Mn(2+). Residue Gly211 participates in NADPH binding. 4 residues coordinate 1-deoxy-D-xylulose 5-phosphate: Ser218, Asn223, Lys224, and Glu227. Glu227 is a Mn(2+) binding site.

It belongs to the DXR family. Mg(2+) serves as cofactor. The cofactor is Mn(2+).

The enzyme catalyses 2-C-methyl-D-erythritol 4-phosphate + NADP(+) = 1-deoxy-D-xylulose 5-phosphate + NADPH + H(+). The protein operates within isoprenoid biosynthesis; isopentenyl diphosphate biosynthesis via DXP pathway; isopentenyl diphosphate from 1-deoxy-D-xylulose 5-phosphate: step 1/6. Its function is as follows. Catalyzes the NADPH-dependent rearrangement and reduction of 1-deoxy-D-xylulose-5-phosphate (DXP) to 2-C-methyl-D-erythritol 4-phosphate (MEP). The polypeptide is 1-deoxy-D-xylulose 5-phosphate reductoisomerase (Gluconobacter oxydans (strain 621H) (Gluconobacter suboxydans)).